The sequence spans 168 residues: Large ribosomal subunit protein uL10 (168 aa).

Belongs to the universal ribosomal protein uL10 family. Part of the ribosomal stalk of the 50S ribosomal subunit. The N-terminus interacts with L11 and the large rRNA to form the base of the stalk. The C-terminus forms an elongated spine to which L12 dimers bind in a sequential fashion forming a multimeric L10(L12)X complex.

In terms of biological role, forms part of the ribosomal stalk, playing a central role in the interaction of the ribosome with GTP-bound translation factors. In Levilactobacillus brevis (strain ATCC 367 / BCRC 12310 / CIP 105137 / JCM 1170 / LMG 11437 / NCIMB 947 / NCTC 947) (Lactobacillus brevis), this protein is Large ribosomal subunit protein uL10.